The primary structure comprises 629 residues: 1-deoxy-D-xylulose-5-phosphate synthase (629 aa).

Thiamine diphosphate-binding positions include His-78 and 119 to 121; that span reads AHS. Asp-150 lines the Mg(2+) pocket. Thiamine diphosphate is bound by residues 151 to 152, Asn-179, Tyr-286, and Glu-368; that span reads GA. A Mg(2+)-binding site is contributed by Asn-179.

Belongs to the transketolase family. DXPS subfamily. As to quaternary structure, homodimer. Requires Mg(2+) as cofactor. It depends on thiamine diphosphate as a cofactor.

It catalyses the reaction D-glyceraldehyde 3-phosphate + pyruvate + H(+) = 1-deoxy-D-xylulose 5-phosphate + CO2. The protein operates within metabolic intermediate biosynthesis; 1-deoxy-D-xylulose 5-phosphate biosynthesis; 1-deoxy-D-xylulose 5-phosphate from D-glyceraldehyde 3-phosphate and pyruvate: step 1/1. Catalyzes the acyloin condensation reaction between C atoms 2 and 3 of pyruvate and glyceraldehyde 3-phosphate to yield 1-deoxy-D-xylulose-5-phosphate (DXP). The polypeptide is 1-deoxy-D-xylulose-5-phosphate synthase (Acidovorax sp. (strain JS42)).